We begin with the raw amino-acid sequence, 527 residues long: Hopanoid C-2 methylase (527 aa).

In terms of domain architecture, B12-binding spans 36-148; the sequence is VAAFMPPQGL…AKLTHDVTRP (113 aa). The Radical SAM core domain maps to 173–408; it reads AECSKYLLGS…HDQVVAMWKD (236 aa). Residues Cys189, Cys193, and Cys196 each contribute to the [4Fe-4S] cluster site.

This sequence belongs to the radical SAM superfamily. Requires [4Fe-4S] cluster as cofactor.

In terms of biological role, required for methylation of hopanoids at the C-2 position. The protein is Hopanoid C-2 methylase of Rhodopseudomonas palustris (strain TIE-1).